A 359-amino-acid polypeptide reads, in one-letter code: 3-dehydroquinate synthase (359 aa).

NAD(+) contacts are provided by residues Asp71–Lys76, Gly105–Asp109, Thr129–Thr130, Lys142, Lys151, and Cys169–Thr172. Zn(2+)-binding residues include Glu184, His247, and His264.

It belongs to the sugar phosphate cyclases superfamily. Dehydroquinate synthase family. Requires Co(2+) as cofactor. Zn(2+) is required as a cofactor. It depends on NAD(+) as a cofactor.

The protein localises to the cytoplasm. The enzyme catalyses 7-phospho-2-dehydro-3-deoxy-D-arabino-heptonate = 3-dehydroquinate + phosphate. The protein operates within metabolic intermediate biosynthesis; chorismate biosynthesis; chorismate from D-erythrose 4-phosphate and phosphoenolpyruvate: step 2/7. Its function is as follows. Catalyzes the conversion of 3-deoxy-D-arabino-heptulosonate 7-phosphate (DAHP) to dehydroquinate (DHQ). The polypeptide is 3-dehydroquinate synthase (Shewanella halifaxensis (strain HAW-EB4)).